The primary structure comprises 239 residues: Methylthioribulose-1-phosphate dehydratase (239 aa).

Residue C94 participates in substrate binding. Positions 112 and 114 each coordinate Zn(2+). The active-site Proton donor/acceptor is the E136. H192 contributes to the Zn(2+) binding site.

This sequence belongs to the aldolase class II family. MtnB subfamily. The cofactor is Zn(2+).

The protein resides in the cytoplasm. It catalyses the reaction 5-(methylsulfanyl)-D-ribulose 1-phosphate = 5-methylsulfanyl-2,3-dioxopentyl phosphate + H2O. The protein operates within amino-acid biosynthesis; L-methionine biosynthesis via salvage pathway; L-methionine from S-methyl-5-thio-alpha-D-ribose 1-phosphate: step 2/6. Catalyzes the dehydration of methylthioribulose-1-phosphate (MTRu-1-P) into 2,3-diketo-5-methylthiopentyl-1-phosphate (DK-MTP-1-P). Functions in the methionine salvage pathway. May play a role in apoptosis. In Xenopus tropicalis (Western clawed frog), this protein is Methylthioribulose-1-phosphate dehydratase.